The primary structure comprises 92 residues: Signal recognition particle 19 kDa protein (92 aa).

It belongs to the SRP19 family. As to quaternary structure, part of the signal recognition particle protein translocation system, which is composed of SRP and FtsY. Archaeal SRP consists of a 7S RNA molecule of 300 nucleotides and two protein subunits: SRP54 and SRP19.

The protein localises to the cytoplasm. Functionally, involved in targeting and insertion of nascent membrane proteins into the cytoplasmic membrane. Binds directly to 7S RNA and mediates binding of the 54 kDa subunit of the SRP. The sequence is that of Signal recognition particle 19 kDa protein from Halobacterium salinarum (strain ATCC 29341 / DSM 671 / R1).